Consider the following 47-residue polypeptide: Potamin-1 (47 aa).

3 disulfides stabilise this stretch: Cys-3–Cys-40, Cys-6–Cys-24, and Cys-7–Cys-36.

Its function is as follows. Inhibitor of serine proteases chymotrypsin, papain and trypsin. Has strong antifungal activity against C.albicans and R.solani. Has antibacterial activity against the Gram-positive bacterium C.michiganense, but lacks antibacterial activity against the Gram-positive bacterium S.aureus. Lacks hemolytic activity against human erythrocytes. The chain is Potamin-1 from Solanum tuberosum (Potato).